The following is a 2715-amino-acid chain: Cilia- and flagella-associated protein 46 (2715 aa).

TPR repeat units lie at residues 89-122 (CRAQMCAPKSAENLEEFENCVTEYMKAINFAKGE), 175-208 (AELMLELLECYLQAGRKEEAARFCSTAAPFIKSH), 261-295 (GDISVILRKAYRHLGHYNHQRFPSISEEKMLLLFE), 324-359 (PGKLIEMECLECESEALRLESKMKVYNRAAVEAQLD), 426-459 (CQVHMEMAQIEEDEDRLEPATEHLRKAARLDSLG), 469-503 (STRLRLCTTLYQAPERAEDKAIMAVEQAKKATPKD), 807-845 (SRKFMRPNAFHSPLDAGATSEIKTAVEVCEFALNLTNGS), 936-969 (LQTLTRLTHFAHAARDHETTMACAHRALEMGIKY), 1111-1144 (AALYGLLFHSHADQDDWEGGLKVLDEAVQVLPRT), and 1174-1211 (AESEDYLARMWHRLALNSPSVSGELACYNNAIQALQKP). Residues 1356–1412 (SHLLLPKKEKENERSKEKEKERSKEKENERSKEKDKEKGKEEKVKEPKQSQSPAPIK) are disordered. Residues 1361–1403 (PKKEKENERSKEKEKERSKEKENERSKEKDKEKGKEEKVKEPK) show a composition bias toward basic and acidic residues. The stretch at 1362 to 1401 (KKEKENERSKEKEKERSKEKENERSKEKDKEKGKEEKVKE) forms a coiled coil. Residues 1639–1672 (AQCLLLLAQLANKEKNYGQAKKMIAQAQHLGGSE) form a TPR 11 repeat. The stretch at 1781 to 1810 (VDVKLERAKIKRLRAQNEKDEEQKTAYYLE) forms a coiled coil. Disordered stretches follow at residues 2000–2023 (EEEGATKSSRDPPASRAAPEEHCR), 2294–2319 (AVVADSGKSKGKDKERKTSTGQHSTV), and 2371–2399 (ETEGGVKKEGRSRDPKKRSLAKKGRKGSI). 2 stretches are compositionally biased toward basic and acidic residues: residues 2300–2311 (GKSKGKDKERKT) and 2371–2383 (ETEGGVKKEGRSR). The span at 2384–2398 (DPKKRSLAKKGRKGS) shows a compositional bias: basic residues. TPR repeat units follow at residues 2399-2432 (IPRTIPPDCIIVDSDNFKFVVDPYEEAQGPEMLT) and 2504-2537 (VAVLLDLARSYQSLKRHMESVEHRRSVGRWEANW). The interval 2541–2567 (ASPSEDEWRRGGEPRRGFSDLEGQAAA) is disordered. Positions 2546 to 2559 (DEWRRGGEPRRGFS) are enriched in basic and acidic residues.

This sequence belongs to the CFAP46 family.

It localises to the cytoplasm. Its subcellular location is the cytoskeleton. It is found in the cilium axoneme. As part of the central apparatus of the cilium axoneme plays a role in cilium movement. The sequence is that of Cilia- and flagella-associated protein 46 from Homo sapiens (Human).